Reading from the N-terminus, the 231-residue chain is uncharacterized protein (231 aa).

The next 6 helical transmembrane spans lie at 4–24 (YIIY…LQIS), 29–49 (SMIF…LVIG), 58–78 (AGNA…ALPL), 95–115 (TVVI…LLLG), 147–167 (VTAV…YLVL), and 211–231 (LCGI…YFFV).

Belongs to the YohK (E.coli)/YwbG (IPA-22R) (B.subtilis) family.

Its subcellular location is the cell membrane. This is an uncharacterized protein from Haemophilus influenzae (strain ATCC 51907 / DSM 11121 / KW20 / Rd).